The primary structure comprises 310 residues: 2-dehydropantoate 2-reductase (310 aa).

NADP(+) contacts are provided by residues 9 to 14 (GVGAIG) and asparagine 100. Asparagine 100 contributes to the substrate binding site. Lysine 184 serves as the catalytic Proton donor. Residues asparagine 188, asparagine 192, and serine 259 each contribute to the substrate site. NADP(+) is bound at residue glutamate 270.

The protein belongs to the ketopantoate reductase family.

The protein localises to the cytoplasm. The catalysed reaction is (R)-pantoate + NADP(+) = 2-dehydropantoate + NADPH + H(+). It participates in cofactor biosynthesis; (R)-pantothenate biosynthesis; (R)-pantoate from 3-methyl-2-oxobutanoate: step 2/2. In terms of biological role, catalyzes the NADPH-dependent reduction of ketopantoate into pantoic acid. This is 2-dehydropantoate 2-reductase from Aquifex aeolicus (strain VF5).